Consider the following 837-residue polypeptide: Tuftelin-interacting protein 11 (837 aa).

Residues 1–13 (MSLSHLYRDGEGH) show a composition bias toward basic and acidic residues. Disordered regions lie at residues 1-31 (MSLSHLYRDGEGHMDDDEDERENFEITDWDL), 54-73 (WAERDSDEERPSFGGKRARD), and 85-136 (LKKG…AGGT). The tract at residues 1–50 (MSLSHLYRDGEGHMDDDEDERENFEITDWDLQNEFNPNRQRHWQTKEEAT) is required for interaction with DHX15. At Ser2 the chain carries Phosphoserine. The span at 14–28 (MDDDEDERENFEITD) shows a compositional bias: acidic residues. The span at 54-64 (WAERDSDEERP) shows a compositional bias: basic and acidic residues. Phosphoserine occurs at positions 59 and 98. Positions 91-102 (EEAELEDSDDEE) are enriched in acidic residues. A compositionally biased stretch (basic and acidic residues) spans 103 to 116 (KPVKQDEFPKDFGP). Ser144 bears the Phosphoserine mark. Positions 149–195 (TKGIGQKLLQKMGYVPGRGLGKNAQGIINPIEAKQRKGKGAVGAYGS) constitute a G-patch domain. 2 disordered regions span residues 183-236 (QRKG…KKKP) and 287-313 (HKHSVPDDGLPPQAQPPPPPGKEARAP). Ser210 is subject to Phosphoserine. Residues 217–231 (EFQKELSQWRKDPSG) show a composition bias toward basic and acidic residues. The Nuclear localization signal motif lies at 700–705 (VKDKFN). The required for nuclear speckle localization stretch occupies residues 710 to 734 (IMNRAVSSNVGAYMQPGAREHIAYL).

This sequence belongs to the TFP11/STIP family. As to quaternary structure, identified in the spliceosome C complex. Found in the Intron Large (IL) complex, a post-mRNA release spliceosomal complex containing the excised intron, U2, U5 and U6 snRNPs, and splicing factors. Interacts with TUFT1. Interacts with DHX15; indicative for a recruitment of DHX15 to the IL complex. Interacts with GCFC2.

It is found in the cytoplasm. The protein resides in the nucleus. Functionally, involved in pre-mRNA splicing, specifically in spliceosome disassembly during late-stage splicing events. Intron turnover seems to proceed through reactions in two lariat-intron associated complexes termed Intron Large (IL) and Intron Small (IS). In cooperation with DHX15 seems to mediate the transition of the U2, U5 and U6 snRNP-containing IL complex to the snRNP-free IS complex leading to efficient debranching and turnover of excised introns. May play a role in the differentiation of ameloblasts and odontoblasts or in the forming of the enamel extracellular matrix. This Bos taurus (Bovine) protein is Tuftelin-interacting protein 11 (TFIP11).